Reading from the N-terminus, the 368-residue chain is UDP-galactose/UDP-N-acetylglucosamine transporter srf-3 (368 aa).

The next 8 helical transmembrane spans lie at 72-92, 118-138, 145-165, 174-194, 203-223, 235-254, 273-293, and 317-337; these read FVSTVAVWLTEVIKCFICLFL, LKVCIPAMIYIVQNNLFYVAA, TFMITSQLKIFTAAIFTVIIL, WFALAVLFVGVSLVQLQGTKA, FVGFVAVVVACCLSGFAGIYF, LWMRNVQMAVFSIPASFSAI, SIVWLTVLWYGVGGLSVAVCI, and IFLFDFIPSFTFLLGASLVIF.

It belongs to the nucleotide-sugar transporter family. SLC35A subfamily. Expressed exclusively in pharyngeal cells g1 and g2, lateral seam cells, spermatheca and vas deferens.

It localises to the golgi apparatus membrane. Functionally, acts as a transporter of both UDP-galactose and UDP-N-acetylglucosamine into the Golgi lumen. Apparently transports UDP-galactose and UDP-N-acetylglucosamine simultaneously, and independently, by an unknown mechanism. Functions redundantly with nucleotide sugar transporter nstp-4. May be involved in gonadal development. The protein is UDP-galactose/UDP-N-acetylglucosamine transporter srf-3 (srf-3) of Caenorhabditis elegans.